A 520-amino-acid chain; its full sequence is Bifunctional purine biosynthesis protein PurH (520 aa).

In terms of domain architecture, MGS-like spans 1–150; the sequence is MSDDRKAIKR…KNHPSVAVVV (150 aa).

The protein belongs to the PurH family.

The enzyme catalyses (6R)-10-formyltetrahydrofolate + 5-amino-1-(5-phospho-beta-D-ribosyl)imidazole-4-carboxamide = 5-formamido-1-(5-phospho-D-ribosyl)imidazole-4-carboxamide + (6S)-5,6,7,8-tetrahydrofolate. It catalyses the reaction IMP + H2O = 5-formamido-1-(5-phospho-D-ribosyl)imidazole-4-carboxamide. The protein operates within purine metabolism; IMP biosynthesis via de novo pathway; 5-formamido-1-(5-phospho-D-ribosyl)imidazole-4-carboxamide from 5-amino-1-(5-phospho-D-ribosyl)imidazole-4-carboxamide (10-formyl THF route): step 1/1. It participates in purine metabolism; IMP biosynthesis via de novo pathway; IMP from 5-formamido-1-(5-phospho-D-ribosyl)imidazole-4-carboxamide: step 1/1. This is Bifunctional purine biosynthesis protein PurH from Corynebacterium glutamicum (strain ATCC 13032 / DSM 20300 / JCM 1318 / BCRC 11384 / CCUG 27702 / LMG 3730 / NBRC 12168 / NCIMB 10025 / NRRL B-2784 / 534).